Here is a 304-residue protein sequence, read N- to C-terminus: Large ribosomal subunit protein uL18z (304 aa).

The interval 285 to 304 is disordered; sequence LNALNSSAGADDDDEEEDDE. Acidic residues predominate over residues 294–304; sequence ADDDDEEEDDE.

The protein belongs to the universal ribosomal protein uL18 family. Component of the large ribosomal subunit (LSU).

It localises to the cytoplasm. The protein localises to the nucleus. Functionally, component of the ribosome, a large ribonucleoprotein complex responsible for the synthesis of proteins in the cell. The small ribosomal subunit (SSU) binds messenger RNAs (mRNAs) and translates the encoded message by selecting cognate aminoacyl-transfer RNA (tRNA) molecules. The large subunit (LSU) contains the ribosomal catalytic site termed the peptidyl transferase center (PTC), which catalyzes the formation of peptide bonds, thereby polymerizing the amino acids delivered by tRNAs into a polypeptide chain. The nascent polypeptides leave the ribosome through a tunnel in the LSU and interact with protein factors that function in enzymatic processing, targeting, and the membrane insertion of nascent chains at the exit of the ribosomal tunnel. The polypeptide is Large ribosomal subunit protein uL18z (RPL5A) (Oryza sativa subsp. japonica (Rice)).